The following is a 342-amino-acid chain: Trans-3-hydroxy-L-proline dehydratase (342 aa).

The active-site Proton acceptor is the S90. Substrate contacts are provided by residues 91-92, D251, and 256-257; these read GS and GT.

Belongs to the proline racemase family.

The catalysed reaction is trans-3-hydroxy-L-proline = 1-pyrroline-2-carboxylate + H2O. Its function is as follows. Catalyzes the dehydration of trans-3-hydroxy-L-proline (t3LHyp) to Delta(1)-pyrroline-2-carboxylate (Pyr2C). Displays neither proline racemase activity nor 4-hydroxyproline 2-epimerase activity. This is Trans-3-hydroxy-L-proline dehydratase from Brucella suis biovar 1 (strain 1330).